Here is a 468-residue protein sequence, read N- to C-terminus: Putative BTB/POZ domain and WD-repeat protein R154 (468 aa).

Positions 14 to 85 (SDLQLIVEDS…FYGIDDKLPE (72 aa)) constitute a BTB domain. WD repeat units lie at residues 194-233 (HHSE…IIFN), 354-398 (DEIG…LVKS), and 401-440 (LFDV…IIYT).

This sequence belongs to the mimivirus BTB/WD family.

This Acanthamoeba polyphaga (Amoeba) protein is Putative BTB/POZ domain and WD-repeat protein R154.